Here is a 521-residue protein sequence, read N- to C-terminus: Sphingolipid C9-methyltransferase 2 (521 aa).

2 helical membrane passes run 60-80 (VLISILTIVPWWLSWKVGGGF) and 85-105 (FFAIIVDLPMLAAWWLTISAI). Residues 225–226 (YT), 262–270 (MLDIGCGWG), 288–293 (TLGRNQ), and 318–319 (YR) contribute to the S-adenosyl-L-methionine site.

It belongs to the CFA/CMAS family.

The protein localises to the membrane. The catalysed reaction is a (4E,8E)-4-sphinga-4,8-dienine ceramide + S-adenosyl-L-methionine = a 9-methyl-(4E,8E)-sphinga-4,8-dienine ceramide + S-adenosyl-L-homocysteine + H(+). The protein operates within lipid metabolism; sphingolipid metabolism. Functionally, catalyzes methylation of the sphingoid base component of glucosylceramides (GluCers) at the C9-position. Sphingolipid C9-methylation requires 4,8-desaturated ceramides as substrates. Glucosylceramides play important roles in growth, differentiation and pathogenicity. The methyl group at the C9-position distinguishes fungal glucosylceramides from those of plants and animals and may thus play a role in host-pathogen interactions enabling the host to recognize the fungal attack and initiate specific defense responses. However, C-9 methylation of GlcCers is not essential for the sensitivity of F.graminearum to plant defensins MsDef1 and RsAFP2. The polypeptide is Sphingolipid C9-methyltransferase 2 (Gibberella zeae (strain ATCC MYA-4620 / CBS 123657 / FGSC 9075 / NRRL 31084 / PH-1) (Wheat head blight fungus)).